A 29-amino-acid chain; its full sequence is Small toxic protein ZorP (29 aa).

A helical transmembrane segment spans residues 10 to 27 (VLIAVLELLVALLRLIDL).

Its subcellular location is the membrane. In terms of biological role, toxic component of a type I toxin-antitoxin (TA) system. Overexpression leads to cell stasis and a decrease in colony-forming units. Probably repressed by cognate small RNA orzP. Base pairing occurs between 18 bases in the 5' UTR of zorP mRNA and the 5' end of OrzP sRNA. This is Small toxic protein ZorP from Escherichia coli O157:H7.